The sequence spans 158 residues: Rhombotin-2 (158 aa).

2 LIM zinc-binding domains span residues 30–89 (CGGC…RLFG) and 94–153 (CASC…EWTK).

Interacts with BEX2 and KDM5A. Interacts via its LIM domains with ELF2 and LDB1. Also interacts with basic helix-loop-helix protein TAL1/SCL and can assemble in a complex with LMO2 and TAL1/SCL. Expressed in early mouse development in central nervous system, lung, kidney, liver and spleen but only very low levels occur in thymus.

Its subcellular location is the nucleus. Functionally, acts with TAL1/SCL to regulate red blood cell development. Also acts with LDB1 to maintain erythroid precursors in an immature state. The sequence is that of Rhombotin-2 (Lmo2) from Mus musculus (Mouse).